A 379-amino-acid polypeptide reads, in one-letter code: Glutamate 5-kinase (379 aa).

K14 contacts ATP. Substrate contacts are provided by S54, D141, and N153. ATP contacts are provided by residues 173 to 174 (TD) and 215 to 221 (TGGMATK). Residues 280 to 358 (KGRLLLDIGA…DEIEPLLGYD (79 aa)) enclose the PUA domain.

This sequence belongs to the glutamate 5-kinase family.

The protein localises to the cytoplasm. The catalysed reaction is L-glutamate + ATP = L-glutamyl 5-phosphate + ADP. It participates in amino-acid biosynthesis; L-proline biosynthesis; L-glutamate 5-semialdehyde from L-glutamate: step 1/2. Catalyzes the transfer of a phosphate group to glutamate to form L-glutamate 5-phosphate. This is Glutamate 5-kinase from Shewanella amazonensis (strain ATCC BAA-1098 / SB2B).